A 130-amino-acid polypeptide reads, in one-letter code: Small ribosomal subunit protein uS11 (130 aa).

The protein belongs to the universal ribosomal protein uS11 family. Part of the 30S ribosomal subunit. Interacts with proteins S7 and S18. Binds to IF-3.

Functionally, located on the platform of the 30S subunit, it bridges several disparate RNA helices of the 16S rRNA. Forms part of the Shine-Dalgarno cleft in the 70S ribosome. The sequence is that of Small ribosomal subunit protein uS11 from Rippkaea orientalis (strain PCC 8801 / RF-1) (Cyanothece sp. (strain PCC 8801)).